The chain runs to 1959 residues: Zinc finger protein hangover (1959 aa).

The 77-residue stretch at 79–155 (NCCRLCIAPQ…FSSQAKQRQW (77 aa)) folds into the ZAD domain. Cys81, Cys84, Cys128, and Cys131 together coordinate Zn(2+). Positions 178–208 (GFFDQHLHQQQQHHQHLENELEAEKEKATPT) are disordered. Residues 192 to 205 (QHLENELEAEKEKA) are compositionally biased toward basic and acidic residues. Ser228 carries the phosphoserine modification. Thr246 bears the Phosphothreonine mark. The C2H2-type 1 zinc-finger motif lies at 318–341 (ASCRACSLQFSTRANARRHERNLH). The segment at 447-469 (MTCRCCNKYFSTYKNFMAHVRKK) adopts a C2H2-type 2; degenerate zinc-finger fold. The C2H2-type 3 zinc finger occupies 581–604 (YECKLCPKGFRTKHEFRTHVYDKH). The tract at residues 674–762 (AVSDNASTTG…ANRDASAPKS (89 aa)) is disordered. A compositionally biased stretch (polar residues) spans 677 to 693 (DNASTTGSGMARSNSME). Phosphoserine is present on Ser680. 2 stretches are compositionally biased toward low complexity: residues 716–727 (SSSAAPPLTSTP) and 741–759 (TSASAAAAAQSSANRDASA). C2H2-type zinc fingers lie at residues 770-793 (QVCPICGQQYNNYNNVLRHMESKH) and 801-824 (YKCVRCGLGYPRISYLREHMINVH). Residues Ser832, Ser894, Ser895, Ser898, and Ser899 each carry the phosphoserine modification. The C2H2-type 6 zinc-finger motif lies at 908–930 (KECPICNAVFSNNIGLSNHMRSH). Residues 960–991 (TDSELGVGGTMSESAPATPANVPPAMANQTPQ) form a disordered region. 5 consecutive C2H2-type zinc fingers follow at residues 1011-1034 (MRCRICQRRFSSKKSYRYHMLTDH), 1042-1065 (IKCKLCNAEFAYEKGLKVHLFKVH), 1078-1101 (FECDVCSIVYSSESELQQHKRSVH), 1154-1176 (YQCKYCPSNFNTNKKLAIHINSH), and 1184-1207 (YSCKDCGNVYSGRKSLWVHRYKKH). Positions 1233–1253 (TPTCNRKPITSTGAHQQQDGQ) are enriched in polar residues. The disordered stretch occupies residues 1233-1301 (TPTCNRKPIT…GNGTTVGVAS (69 aa)). The segment covering 1255 to 1267 (HSHHTAKRTIFRH) has biased composition (basic residues). Residues 1271 to 1283 (DDDDEEDDDEQQQ) show a composition bias toward acidic residues. 2 C2H2-type zinc fingers span residues 1318-1340 (VACTICGARFTDQEHFSKHIQKH) and 1375-1397 (YACDLCAKTFPQVIALKVHRKWH). Low complexity predominate over residues 1445–1467 (QQSLNNSCNSSMNHNNNSSSNRS). A disordered region spans residues 1445 to 1471 (QQSLNNSCNSSMNHNNNSSSNRSKSMK). C2H2-type zinc fingers lie at residues 1476-1499 (LKCEYCASTFISNNNLRRHMYELH) and 1552-1574 (WGCDLCGEYLSRKEKLMNHINNH). The interval 1627–1865 (AAGATTTDKL…STGERRKKAV (239 aa)) is disordered. Residues 1639–1695 (PDEEDSDDLDEDSSGDDDDSSGTGDDDDDDDSDDDEDGEGEDEDEEGDGGEGEDEEG) are compositionally biased toward acidic residues. The span at 1697 to 1715 (QPPAQLLPQQQHKTDLNLN) shows a compositional bias: low complexity. 2 stretches are compositionally biased toward acidic residues: residues 1716-1758 (QDDD…EEPE) and 1782-1829 (SDDE…EDEP). Low complexity predominate over residues 1833 to 1851 (STASFSESESSTTTTSNSH). The C2H2-type 16 zinc finger occupies 1873 to 1895 (FTCDLCQLCFDSQELLQSHIKSH). The tract at residues 1933–1959 (PDSKSAVLANNNNSKTSSKTVAAGATN) is disordered. Low complexity predominate over residues 1942-1952 (NNNNSKTSSKT).

In terms of tissue distribution, expressed ubiquitously in the nervous system, in neurons not glia.

The protein localises to the nucleus. Its function is as follows. Required for normal development of ethanol tolerance. Relies on two distinct molecular pathways: a cellular stress pathway defined by hang, and a parallel pathway requiring octopamine. The polypeptide is Zinc finger protein hangover (hang) (Drosophila melanogaster (Fruit fly)).